The sequence spans 113 residues: Large ribosomal subunit protein uL22 (113 aa).

This sequence belongs to the universal ribosomal protein uL22 family. In terms of assembly, part of the 50S ribosomal subunit.

In terms of biological role, this protein binds specifically to 23S rRNA; its binding is stimulated by other ribosomal proteins, e.g. L4, L17, and L20. It is important during the early stages of 50S assembly. It makes multiple contacts with different domains of the 23S rRNA in the assembled 50S subunit and ribosome. Functionally, the globular domain of the protein is located near the polypeptide exit tunnel on the outside of the subunit, while an extended beta-hairpin is found that lines the wall of the exit tunnel in the center of the 70S ribosome. The sequence is that of Large ribosomal subunit protein uL22 from Herpetosiphon aurantiacus (strain ATCC 23779 / DSM 785 / 114-95).